A 160-amino-acid polypeptide reads, in one-letter code: MINLELFKEFLLNLIKDYGYFGIFLVGFSEPIFQPFPTEIFIIAGILLGLDWKLVWLISTIACNFGAVVTYYLAKKYGEKLMLKLFDEEKIKKGSHYLKKWGILGVIIASFTPIPFEVICWVCGSFEMPFERYMIAVFLSRLIRHGMVILPFVLKDHIHF.

This is an uncharacterized protein from Methanocaldococcus jannaschii (strain ATCC 43067 / DSM 2661 / JAL-1 / JCM 10045 / NBRC 100440) (Methanococcus jannaschii).